A 301-amino-acid polypeptide reads, in one-letter code: Acetyl-coenzyme A carboxylase carboxyl transferase subunit beta (301 aa).

Positions 25–294 (LWIKCPETGE…SAANDMNGGA (270 aa)) constitute a CoA carboxyltransferase N-terminal domain.

This sequence belongs to the AccD/PCCB family. As to quaternary structure, acetyl-CoA carboxylase is a heterohexamer composed of biotin carboxyl carrier protein (AccB), biotin carboxylase (AccC) and two subunits each of ACCase subunit alpha (AccA) and ACCase subunit beta (AccD).

The protein resides in the cytoplasm. The enzyme catalyses N(6)-carboxybiotinyl-L-lysyl-[protein] + acetyl-CoA = N(6)-biotinyl-L-lysyl-[protein] + malonyl-CoA. Its pathway is lipid metabolism; malonyl-CoA biosynthesis; malonyl-CoA from acetyl-CoA: step 1/1. Component of the acetyl coenzyme A carboxylase (ACC) complex. Biotin carboxylase (BC) catalyzes the carboxylation of biotin on its carrier protein (BCCP) and then the CO(2) group is transferred by the transcarboxylase to acetyl-CoA to form malonyl-CoA. The chain is Acetyl-coenzyme A carboxylase carboxyl transferase subunit beta from Rhizobium etli (strain CIAT 652).